The primary structure comprises 380 residues: Cytochrome b (380 aa).

4 helical membrane passes run 33–53 (FGSL…FLAM), 77–98 (WLIR…YMHI), 113–133 (WNIG…GYVL), and 178–198 (FFAF…LHLL). Heme b-binding residues include His-83 and His-97. His-182 and His-196 together coordinate heme b. His-201 lines the a ubiquinone pocket. The next 4 helical transmembrane spans lie at 226–246 (YKDL…ALFA), 288–308 (LGGV…PILH), 320–340 (LTQF…WIGG), and 347–367 (FIII…VLSP).

It belongs to the cytochrome b family. In terms of assembly, the cytochrome bc1 complex contains 3 respiratory subunits (MT-CYB, CYC1 and UQCRFS1), 2 core proteins (UQCRC1 and UQCRC2) and probably 6 low-molecular weight proteins. It depends on heme b as a cofactor.

The protein resides in the mitochondrion inner membrane. Its function is as follows. Component of the ubiquinol-cytochrome c reductase complex (complex III or cytochrome b-c1 complex) that is part of the mitochondrial respiratory chain. The b-c1 complex mediates electron transfer from ubiquinol to cytochrome c. Contributes to the generation of a proton gradient across the mitochondrial membrane that is then used for ATP synthesis. This Oncorhynchus mykiss (Rainbow trout) protein is Cytochrome b (mt-cyb).